We begin with the raw amino-acid sequence, 451 residues long: Tubulin alpha-1/alpha-2 chain (451 aa).

A GTP-binding site is contributed by glutamine 11. N6-acetyllysine is present on lysine 40. Residues glutamate 71, glycine 144, threonine 145, threonine 179, asparagine 206, and asparagine 228 each coordinate GTP. A Mg(2+)-binding site is contributed by glutamate 71. The active site involves glutamate 254.

This sequence belongs to the tubulin family. Dimer of alpha and beta chains. A typical microtubule is a hollow water-filled tube with an outer diameter of 25 nm and an inner diameter of 15 nM. Alpha-beta heterodimers associate head-to-tail to form protofilaments running lengthwise along the microtubule wall with the beta-tubulin subunit facing the microtubule plus end conferring a structural polarity. Microtubules usually have 13 protofilaments but different protofilament numbers can be found in some organisms and specialized cells. Requires Mg(2+) as cofactor. Undergoes a tyrosination/detyrosination cycle, the cyclic removal and re-addition of a C-terminal tyrosine residue by the enzymes tubulin tyrosine carboxypeptidase (TTCP) and tubulin tyrosine ligase (TTL), respectively. Post-translationally, acetylation of alpha chains at Lys-40 stabilizes microtubules and affects affinity and processivity of microtubule motors. This modification has a role in multiple cellular functions, ranging from cell motility, cell cycle progression or cell differentiation to intracellular trafficking and signaling.

Its subcellular location is the cytoplasm. It is found in the cytoskeleton. It catalyses the reaction GTP + H2O = GDP + phosphate + H(+). Functionally, tubulin is the major constituent of microtubules, a cylinder consisting of laterally associated linear protofilaments composed of alpha- and beta-tubulin heterodimers. Microtubules grow by the addition of GTP-tubulin dimers to the microtubule end, where a stabilizing cap forms. Below the cap, tubulin dimers are in GDP-bound state, owing to GTPase activity of alpha-tubulin. This is Tubulin alpha-1/alpha-2 chain (TUBA1) from Volvox carteri (Green alga).